The following is a 971-amino-acid chain: Nuclear factor NF-kappa-B p105 subunit (971 aa).

Residues 40-365 form the RHD domain; sequence PYLQILEQPK…EVQRKRQKLM (326 aa). Residue Cys59 is modified to S-nitrosocysteine; alternate. Cys59 carries the S-(15-deoxy-Delta12,14-prostaglandin J2-9-yl)cysteine; alternate lipid modification. Residue Lys323 forms a Glycyl lysine isopeptide (Lys-Gly) (interchain with G-Cter in SUMO2) linkage. Ser335 is subject to Phosphoserine; by PKA. The Nuclear localization signal signature appears at 358–363; that stretch reads QRKRQK. Residues 370–392 are GRR; it reads DSFGGGSGAGAGGGGMFGSGGGG. Residues 433-971 are interaction with CFLAR; that stretch reads INTKFKNGPK…GQEGPIEGKI (539 aa). An N6-acetyllysine; by EP300 modification is found at Lys438. The tract at residues 439–470 is disordered; that stretch reads NGPKDCAKSDDEESLTLPEKETEGEGPSLPMA. At Ser447 the chain carries Phosphoserine. 6 ANK repeats span residues 538–567, 577–606, 610–639, 646–675, 680–710, and 714–743; these read NGDS…GLIS, LYQT…DLSL, WGNS…AAPL, EGLN…EVNA, SGRT…HVDS, and DGTT…DPLV. The essential for interaction with HIF1AN stretch occupies residues 646–680; that stretch reads EGLNAIHIAVMSNSLPCLLLLVAAGAEVNAQEQKS. Residue Asn674 is modified to (3S)-3-hydroxyasparagine; by HIF1AN. Ser755 carries the phosphoserine modification. The stretch at 767-797 is one ANK 7 repeat; it reads PGTTPLDMAANWQVFDILNGKPYEPVFTSDD. The Death domain occupies 801–888; the sequence is QGDMKQLTED…EAIEVIQAAF (88 aa). Ser896 bears the Phosphoserine mark. Phosphoserine; by GSK3-beta; in vitro is present on Ser910. Ser926 is subject to Phosphoserine. Ser930 and Ser935 each carry phosphoserine; by IKKB. A Phosphoserine modification is found at Ser940. Thr946 is subject to Phosphothreonine.

In terms of assembly, component of the NF-kappa-B p65-p50 complex. Homodimer; component of the NF-kappa-B p50-p50 complex. Component of the NF-kappa-B p105-p50 complex. Component of the NF-kappa-B p50-c-Rel complex. Component of a complex consisting of the NF-kappa-B p50-p50 homodimer and BCL3. Also interacts with MAP3K8. NF-kappa-B p50 subunit interacts with NCOA3 coactivator, which may coactivate NF-kappa-B dependent expression via its histone acetyltransferase activity. Interacts with TSC22D3; this interaction prevents nuclear translocation and DNA-binding. Interacts with SPAG9 and UNC5CL. NFKB1/p105 interacts with CFLAR; the interaction inhibits p105 processing into p50. NFKB1/p105 forms a ternary complex with MAP3K8 and TNIP2. Interacts with GSK3B; the interaction prevents processing of p105 to p50. NFKB1/p50 interacts with NFKBIE. NFKB1/p50 interacts with NFKBIZ. Nuclear factor NF-kappa-B p50 subunit interacts with NFKBID. Directly interacts with MEN1. Interacts with HIF1AN. Interacts with FEM1AA; interaction is direct. In terms of processing, generation of the NF-kappa-B p50 (Nuclear factor NF-kappa-B p50 subunit) transcription factor takes place both cotranslationally and post-translationally via non-mutually exclusive mechanisms. A cotranslational processing allows the production of both p50 and p105 (Nuclear factor NF-kappa-B p105 subunit) from a single NFKB1 mRNA. While translation occurs, the particular unfolded structure after the GRR repeat region acts as a substrate for the proteasome, promoting degradation of the C-terminus. The GRR acts as a proteasomal 'stop signal', protecting the region upstream of the GRR from degradation and promoting generation of p50. It is unclear if limited proteasome degradation during cotranslational processing depends on ubiquitination. NF-kappa-B p50 is also generated post-translationally following ubiquitination by the KPC complex, leading to limited processing by the proteasome downstream of the GRR region, thereby generating p50. Phosphorylation at the C-terminus by IKBKB/IKKB acts as a signal for ubiquitination and promotes either complete degradation or processing to generate the NF-kappa-B p50 (Nuclear factor NF-kappa-B p50 subunit). Phosphorylation at Ser-910 primes p105 for proteolytic processing in response to TNF-alpha stimulation. Phosphorylation at Ser-926, Ser-930 and Ser-935 are required for BTRC/BTRCP-mediated ubiquitination and proteolysis. Phosphorylation at Ser-930 is also required for ubiquitination by the KPC complex and limited processing to generate NF-kappa-B p50 (Nuclear factor NF-kappa-B p50 subunit). Post-translationally, polyubiquitinated at multiple Lys residues in the C-terminus. Polyubiquitinated by the SCF(FBXW11) and SCF(BTRC) complexes following phosphorylation at Ser-926, Ser-930 and Ser-935, leading to its complete degradation. In contrast, polyubiquitination by the KPC complex following phosphorylation at Ser-930 leads to limited proteosomal processing and generation of the active NF-kappa-B p50 (Nuclear factor NF-kappa-B p50 subunit). In terms of processing, S-nitrosylation of Cys-59 affects DNA binding. The covalent modification of cysteine by 15-deoxy-Delta12,14-prostaglandin-J2 is autocatalytic and reversible. It may occur as an alternative to other cysteine modifications, such as S-nitrosylation and S-palmitoylation.

It localises to the cytoplasm. It is found in the nucleus. In terms of biological role, NF-kappa-B is a pleiotropic transcription factor present in almost all cell types and is the endpoint of a series of signal transduction events that are initiated by a vast array of stimuli related to many biological processes such as inflammation, immunity, differentiation, cell growth, tumorigenesis and apoptosis. NF-kappa-B is a homo- or heterodimeric complex formed by the Rel-like domain-containing proteins RELA/p65, RELB, NFKB1/p105, NFKB1/p50, REL and NFKB2/p52 and the heterodimeric p65-p50 complex appears to be most abundant one. The dimers bind at kappa-B sites in the DNA of their target genes and the individual dimers have distinct preferences for different kappa-B sites that they can bind with distinguishable affinity and specificity. Different dimer combinations act as transcriptional activators or repressors, respectively. NF-kappa-B is controlled by various mechanisms of post-translational modification and subcellular compartmentalization as well as by interactions with other cofactors or corepressors. NF-kappa-B complexes are held in the cytoplasm in an inactive state complexed with members of the NF-kappa-B inhibitor (I-kappa-B) family. In a conventional activation pathway, I-kappa-B is phosphorylated by I-kappa-B kinases (IKKs) in response to different activators, subsequently degraded thus liberating the active NF-kappa-B complex which translocates to the nucleus. NF-kappa-B heterodimeric p65-p50 and RelB-p50 complexes are transcriptional activators. The NF-kappa-B p50-p50 homodimer is a transcriptional repressor, but can act as a transcriptional activator when associated with BCL3. NFKB1 appears to have dual functions such as cytoplasmic retention of attached NF-kappa-B proteins by p105 and generation of p50 by a cotranslational processing. The proteasome-mediated process ensures the production of both p50 and p105 and preserves their independent function, although processing of NFKB1/p105 also appears to occur post-translationally. p50 binds to the kappa-B consensus sequence 5'-GGRNNYYCC-3', located in the enhancer region of genes involved in immune response and acute phase reactions. Plays a role in the regulation of apoptosis. In a complex with MAP3K8, NFKB1/p105 represses MAP3K8-induced MAPK signaling; active MAP3K8 is released by proteasome-dependent degradation of NFKB1/p105. Its function is as follows. P105 is the precursor of the active p50 subunit (Nuclear factor NF-kappa-B p50 subunit) of the nuclear factor NF-kappa-B. Acts as a cytoplasmic retention of attached NF-kappa-B proteins by p105. Constitutes the active form, which associates with RELA/p65 to form the NF-kappa-B p65-p50 complex to form a transcription factor. Together with RELA/p65, binds to the kappa-B consensus sequence 5'-GGRNNYYCC-3', located in the enhancer region of genes involved in immune response and acute phase reactions. Functionally, isoform 3 (p98) (but not p84 or p105) acts as a transactivator of NF-kappa-B-regulated gene expression. In terms of biological role, acts as an inhibitor of transactivation of p50 NF-kappa-B subunit, probably by sequestering it in the cytoplasm. The polypeptide is Nuclear factor NF-kappa-B p105 subunit (Nfkb1) (Mus musculus (Mouse)).